The chain runs to 80 residues: Cell division protein ZapB (80 aa).

Residues 3-80 (FEVLEQLESK…ALLGKMDEVE (78 aa)) adopt a coiled-coil conformation.

Belongs to the ZapB family. Homodimer. The ends of the coiled-coil dimer bind to each other, forming polymers. Interacts with FtsZ.

It localises to the cytoplasm. Functionally, non-essential, abundant cell division factor that is required for proper Z-ring formation. It is recruited early to the divisome by direct interaction with FtsZ, stimulating Z-ring assembly and thereby promoting cell division earlier in the cell cycle. Its recruitment to the Z-ring requires functional FtsA or ZipA. This chain is Cell division protein ZapB, found in Vibrio parahaemolyticus serotype O3:K6 (strain RIMD 2210633).